The primary structure comprises 466 residues: UDP-N-acetylmuramoylalanine--D-glutamate ligase (466 aa).

115–121 is an ATP binding site; it reads GTDGKTT.

The protein belongs to the MurCDEF family.

It localises to the cytoplasm. It carries out the reaction UDP-N-acetyl-alpha-D-muramoyl-L-alanine + D-glutamate + ATP = UDP-N-acetyl-alpha-D-muramoyl-L-alanyl-D-glutamate + ADP + phosphate + H(+). Its pathway is cell wall biogenesis; peptidoglycan biosynthesis. Its function is as follows. Cell wall formation. Catalyzes the addition of glutamate to the nucleotide precursor UDP-N-acetylmuramoyl-L-alanine (UMA). This chain is UDP-N-acetylmuramoylalanine--D-glutamate ligase, found in Chlorobium phaeobacteroides (strain BS1).